Reading from the N-terminus, the 308-residue chain is tRNA dimethylallyltransferase (308 aa).

Glycine 14 to threonine 21 lines the ATP pocket. Threonine 16–threonine 21 contributes to the substrate binding site. Interaction with substrate tRNA stretches follow at residues aspartate 39–leucine 42, glutamine 163–arginine 167, and arginine 244–arginine 249.

The protein belongs to the IPP transferase family. As to quaternary structure, monomer. Mg(2+) is required as a cofactor.

The enzyme catalyses adenosine(37) in tRNA + dimethylallyl diphosphate = N(6)-dimethylallyladenosine(37) in tRNA + diphosphate. In terms of biological role, catalyzes the transfer of a dimethylallyl group onto the adenine at position 37 in tRNAs that read codons beginning with uridine, leading to the formation of N6-(dimethylallyl)adenosine (i(6)A). The sequence is that of tRNA dimethylallyltransferase from Shewanella baltica (strain OS223).